The primary structure comprises 348 residues: Protein RecA (348 aa).

66-73 (GPESSGKT) provides a ligand contact to ATP.

The protein belongs to the RecA family.

Its subcellular location is the cytoplasm. In terms of biological role, can catalyze the hydrolysis of ATP in the presence of single-stranded DNA, the ATP-dependent uptake of single-stranded DNA by duplex DNA, and the ATP-dependent hybridization of homologous single-stranded DNAs. It interacts with LexA causing its activation and leading to its autocatalytic cleavage. This Neisseria meningitidis serogroup A / serotype 4A (strain DSM 15465 / Z2491) protein is Protein RecA.